The following is a 131-amino-acid chain: Probable calcium-binding protein CML34 (131 aa).

EF-hand domains are found at residues 1 to 33 (MSAK…FSPY), 34 to 69 (FTQE…MLKE), 70 to 97 (VFVF…LGKK), and 98 to 131 (FTEE…IGDI). Ca(2+) contacts are provided by D11, N13, D15, K17, E22, D47, D49, N51, E53, and E58. Residues D111, D113, D115, Y117, and E122 each contribute to the Ca(2+) site.

Potential calcium sensor. The protein is Probable calcium-binding protein CML34 (CML34) of Arabidopsis thaliana (Mouse-ear cress).